The sequence spans 166 residues: Protein SprT (166 aa).

One can recognise a SprT-like domain in the interval 21–160; sequence ANQHFSREFP…CQQCQQTLAF (140 aa). Histidine 74 is a binding site for Zn(2+). Glutamate 75 is a catalytic residue. Histidine 78 is a binding site for Zn(2+).

Belongs to the SprT family. Requires Zn(2+) as cofactor.

The protein resides in the cytoplasm. The polypeptide is Protein SprT (Vibrio atlanticus (strain LGP32) (Vibrio splendidus (strain Mel32))).